The chain runs to 2410 residues: MEQTLAQAVSRRNKTDTPMAEERKHFSPMNFSANFVAPELFYSANVRKIKNIFKERSTTRFLDAISSDFELVAFLTLSPAHLMQLETVLRQEMRSCAVPIVTSDASFETVAVIKTALDGMRFHFGYTTLEKGWISMMRHAESCLQESSSSAVNDLQTPIKRVGSLLLSGKNRVEGCELSVLNLTARRFRIEYGLNGTYFGEHVAMLRDLKRYIYGTVPKEFLWAKTKKHLPFTIPAWITRTPIDCFLFCLRVIPILHRFGVAMSLIYFSCVAALNFPAFMGFLFKRQFAKYLAHSFAKHSIYFMFLTIVAILWSFRTFTSQKPKIVLQARSTAEKEKKLMMILASVVGITYLFDYDIAEALGNCLHKISRLSSYLLDDHQGIASRMFGASYGLQAGDSAEDAVTTIISDLLSVTFKIVDEDASQGTVEDASETTFHSWVGVNTLAGRNMSRPLQYSVNKTYALTPQNVQLQARAMADANNCWSMVVGHTGSGKSTYLPVQYSNYLSTKSDRRQQILICEPTQAATENVCAGVAANLGRAVYGRHEGWSRMGDHCIQVMTYGSALQCHAMDPSFISTFDAIFLDEAHDVKEHSLVFESICDTFKSVRKFYVSATPRDGSVCPEAARKYPLHVETSVCDSYRKFIAAQGGGDLLDISKHDTALVFLAGRPECIKAANAWNASVTGEKRAFSLSSDNFATDFSMLTERLKTHKTIIFTTNIIETGVTLSVDCVVDFGHTMRPCLDLNQKSLRLDRRKVTRNERQQRIGPTGRLKDGYAIVCGDVDRAVNVISPDVLYGAALLSFKHNVPFYMNETFESSWLKGVTKAQADTMTIFKLPIFLTRDLINADGSVAKEFLDVLKKHQFTTSDIKQAPSITAKHIFPTWASYFSLHQALHYGDDKDEIPHELRYARVPFSVTTLSKFDWPALALACEKHRASMSNVFAGIEEPARVVTLQTNPANIQASITHLMHMSKNYKTLIENNQHVRQSMMTNVMYKWFSSTRITKDLDRNLRRCTDNLAVVEATLSSLRQILAGNTQVHATPHMQSTLEDIIGLQASDTLTEESLASALGIFVPKSNLFLLLATKGFKLVYVICILLLVNLVYIGLRKWREHLKQKGSDEILTNTMPVSEGGEILAEVMKMEPKMRKNIKRDMDEAVESKLCGFTFVFPDDDKIGLEGKGNKYRPREDARLMYSTREDATFDAWNEKAKERRKKVTDKSEPELRRAYEKRPYFNFYDLQTDSNILEAIFYTTEGDEFFRTADPNKDMNLVADKLRSFLDTKLVVGHHQRKLLEETAQVVIKDTKGTAHKMEISQHDPDCLKQNGSGKVGYPEHRGQFRQEGVAITSDYDLGVEFGTDTDNITLEASTGILLSQVGVDVATRVGRISIGTFNMNCYFYNDWILVPGHLQDRSGNVTIQFPDQTVQTTTDALNANGVKRFYGLDVIAIRRPAILRPRTKLVKAFAIEEPVIAQMVFVDAQGVRKFTQSDWARKGENSGRWSHKISTVLGMCGCQFWTLERQIDGIHVATNYTKKRNEFQPFTQEVVDFINGPGTKIPYCPWVFDRPACGYASHTALFEKPTTLTDVIHMQASDGLHNINNAIEGFGSSLRGQLVSPPTESTRQRFDKLFGSGSFELIGQMNKGLIDKHVIVGENDDVYDFMREHPTFTWLKDFMNEYAPSVLSYSAYYKDLCKYNRAKHVLTYNPEELHYATKGLIKMLEDAGLTQGSVRTPQQVISDIQWNTSAGPSYQGKKRDLCAHLSDDEVLHLAEVCRQQFLEGKSTGVWNGSLKAELRTIEKVEPEKTRVFTASPITSLFAMKFYVDDFNKKFYATNLKAPHTVGINKFGRGWERLHDKLNRPGWLHGSGDGSRFDSSIDPFFFDVVKTIRKHFLPSEHHKAIDLIYDEILNTTICLANGMVIKKNVGTQRQPSTVVDNTLVLMTAFLYAYIHKTGDRELALLNERFIFVCNGDDNKFAISPQFDEEFGHDFSPELVELGLTYEFDDITSDICENPYMSLTMVKTPFGVGFSLPVERIIAIMQWSKKGGVLHSYLAGISAIYESFNTPKLFKSIYAYLLWLTEEHEAEILAAMTQSSTALPIPSMLDVYRLHYGDDEIWLQAADPLTDAQKEAAHTAAADRARLDLADADRRRKVEADRVEAARVKKAADAALKPVNLTATRMPTEDDGKLKTPSGARIPSSAADGNWSVPATKQVNAGLTLKIPLNKLKSVPKSVMEHNNSVALESELKAWTDAVRTSLGITTDEAWIDALIPFIGWCCNNGTSDKHAENQVMQIDSGKGAVTEMSLSPFIVHARMNGGLRRIMRNYSDETVLLITNNKLVAHWSMKHGASANAKYAFDFFVPRSWMNPQDIEVSKQARLAALGTGTYNTMLTSDTTNLRKTTNHRVLDSDGHPELT.

The segment at 1–21 is disordered; that stretch reads MEQTLAQAVSRRNKTDTPMAE. Residues 474-632 enclose the Helicase ATP-binding domain; the sequence is AMADANNCWS…AARKYPLHVE (159 aa). Residue 487–494 participates in ATP binding; it reads GHTGSGKS. A DEAH box motif is present at residues 583–586; it reads DEAH. The 167-residue stretch at 647-813 folds into the Helicase C-terminal domain; it reads GGGDLLDISK…NVPFYMNETF (167 aa). Tyr-1234 bears the O-(5'-phospho-RNA)-tyrosine mark. One can recognise a Peptidase C4 domain in the interval 1359–1573; sequence ITLEASTGIL…CGYASHTALF (215 aa). Residues His-1404, Asp-1440, and Cys-1507 each act as for nuclear inclusion protein A activity in the active site. In terms of domain architecture, RdRp catalytic spans 1857 to 1980; the sequence is WLHGSGDGSR…AISPQFDEEF (124 aa). The interval 2175 to 2200 is disordered; it reads MPTEDDGKLKTPSGARIPSSAADGNW.

This sequence belongs to the bymoviruses polyprotein 1 family. VPg is uridylylated by the polymerase and is covalently attached to the 5'-end of the genomic RNA. This uridylylated form acts as a nucleotide-peptide primer for the polymerase. In terms of processing, the viral RNA1 of bymoviruses is expressed as a single polyprotein which undergoes post-translational proteolytic processing by the main proteinase NIa-pro resulting in the production of at least eight individual proteins.

The protein localises to the host cytoplasmic vesicle. It is found in the virion. The enzyme catalyses RNA(n) + a ribonucleoside 5'-triphosphate = RNA(n+1) + diphosphate. It carries out the reaction Hydrolyzes glutaminyl bonds, and activity is further restricted by preferences for the amino acids in P6 - P1' that vary with the species of potyvirus, e.g. Glu-Xaa-Xaa-Tyr-Xaa-Gln-|-(Ser or Gly) for the enzyme from tobacco etch virus. The natural substrate is the viral polyprotein, but other proteins and oligopeptides containing the appropriate consensus sequence are also cleaved.. In terms of biological role, indispensable for virus replication. Mediates the cap-independent, EIF4E-dependent translation of viral genomic RNAs. Binds to the cap-binding site of host EIF4E and thus interferes with the host EIF4E-dependent mRNA export and translation. VPg-RNA directly binds EIF4E and is a template for transcription. Also forms trimeric complexes with EIF4E-EIF4G, which are templates for translation. Its function is as follows. Has RNA-binding and proteolytic activities. Functionally, an RNA-dependent RNA polymerase that plays an essential role in the virus replication. The protein is Genome polyprotein 1 of Hordeum vulgare (Barley).